We begin with the raw amino-acid sequence, 188 residues long: Elongation factor P (188 aa).

The residue at position 34 (Lys-34) is an N6-(3,6-diaminohexanoyl)-5-hydroxylysine.

The protein belongs to the elongation factor P family. In terms of processing, may be beta-lysylated on the epsilon-amino group of Lys-34 by the combined action of EpmA and EpmB, and then hydroxylated on the C5 position of the same residue by EpmC (if this protein is present). Lysylation is critical for the stimulatory effect of EF-P on peptide-bond formation. The lysylation moiety may extend toward the peptidyltransferase center and stabilize the terminal 3-CCA end of the tRNA. Hydroxylation of the C5 position on Lys-34 may allow additional potential stabilizing hydrogen-bond interactions with the P-tRNA.

Its subcellular location is the cytoplasm. Its pathway is protein biosynthesis; polypeptide chain elongation. Functionally, involved in peptide bond synthesis. Alleviates ribosome stalling that occurs when 3 or more consecutive Pro residues or the sequence PPG is present in a protein, possibly by augmenting the peptidyl transferase activity of the ribosome. Modification of Lys-34 is required for alleviation. The protein is Elongation factor P of Sodalis glossinidius (strain morsitans).